We begin with the raw amino-acid sequence, 630 residues long: Protein mono-ADP-ribosyltransferase PARP6 (630 aa).

At cysteine 237 the chain carries ADP-ribosylcysteine. The 227-residue stretch at 394–620 folds into the PARP catalytic domain; the sequence is EMTQGSYLEI…QDPKIQKEIM (227 aa). Position 600 is an ADP-ribosyl aspartic acid (aspartate 600).

This sequence belongs to the ARTD/PARP family. Post-translationally, auto-mono-ADP-ribosylated.

The catalysed reaction is L-aspartyl-[protein] + NAD(+) = 4-O-(ADP-D-ribosyl)-L-aspartyl-[protein] + nicotinamide. It carries out the reaction L-cysteinyl-[protein] + NAD(+) = S-(ADP-D-ribosyl)-L-cysteinyl-[protein] + nicotinamide + H(+). In terms of biological role, mono-ADP-ribosyltransferase that mediates mono-ADP-ribosylation of target proteins. The sequence is that of Protein mono-ADP-ribosyltransferase PARP6 from Mus musculus (Mouse).